A 334-amino-acid chain; its full sequence is Phosphatidylglycerol--prolipoprotein diacylglyceryl transferase (334 aa).

4 helical membrane passes run 22 to 42, 54 to 74, 105 to 125, and 131 to 151; these read FLPF…VVAA, AEPG…IIGA, IWEG…GVGI, and GLRF…AQAI. An a 1,2-diacyl-sn-glycero-3-phospho-(1'-sn-glycerol)-binding site is contributed by R153. Helical transmembrane passes span 191–211 and 251–271; these read LFQP…FVIL and FLGI…GAII. The tract at residues 296–334 is disordered; sequence PQAEVESGETDPEEILHADDDEERTGTHKPQATSLSGSN. Acidic residues predominate over residues 301-318; it reads ESGETDPEEILHADDDEE. Over residues 323-334 the composition is skewed to polar residues; it reads HKPQATSLSGSN.

Belongs to the Lgt family.

The protein localises to the cell membrane. The enzyme catalyses L-cysteinyl-[prolipoprotein] + a 1,2-diacyl-sn-glycero-3-phospho-(1'-sn-glycerol) = an S-1,2-diacyl-sn-glyceryl-L-cysteinyl-[prolipoprotein] + sn-glycerol 1-phosphate + H(+). The protein operates within protein modification; lipoprotein biosynthesis (diacylglyceryl transfer). Its function is as follows. Catalyzes the transfer of the diacylglyceryl group from phosphatidylglycerol to the sulfhydryl group of the N-terminal cysteine of a prolipoprotein, the first step in the formation of mature lipoproteins. In Leifsonia xyli subsp. xyli (strain CTCB07), this protein is Phosphatidylglycerol--prolipoprotein diacylglyceryl transferase.